The chain runs to 225 residues: Transmembrane protein 225 (225 aa).

Residues 1 to 8 (MVHVSNRS) are Cytoplasmic-facing. A helical membrane pass occupies residues 9 to 29 (IQGMNILFSSWAVVLMVMGIT). Over 30 to 72 (LDKWVELISEDERAKMNHSPWMMCCPALWPEDDLKVVRIMMTS) the chain is Extracellular. The helical transmembrane segment at 73–93 (SLGLSFLLNLILGMKFTYLIP) threads the bilayer. Residues 94-99 (QNKYIQ) are Cytoplasmic-facing. A helical membrane pass occupies residues 100–120 (LFTTILSFFSGISLLWALILY). Topologically, residues 121–136 (HNKLKQGQSMHFSSYR) are extracellular. The helical transmembrane segment at 137–157 (ITWIMYTAYLNVFFLSVCGVL) threads the bilayer. Over 158 to 225 (SLLECKLSTS…VQTRHVTWAL (68 aa)) the chain is Cytoplasmic. The RVxF motif lies at 219 to 223 (RHVTW).

In terms of assembly, interacts (via RVxF motif) with PPP1CC.

It localises to the cytoplasmic vesicle. The protein localises to the secretory vesicle. It is found in the acrosome membrane. Its function is as follows. Probably inhibits protein phosphatase 1 (PP1) in sperm via binding to catalytic subunit PPP1CC. The protein is Transmembrane protein 225 (TMEM225) of Homo sapiens (Human).